An 890-amino-acid chain; its full sequence is Translation initiation factor IF-2 (890 aa).

Disordered stretches follow at residues 31 to 164 (KLAQ…PAEP) and 189 to 266 (FKAP…ESLK). A compositionally biased stretch (basic and acidic residues) spans 42 to 54 (SSSEKPSAKEKSV). Over residues 55–72 (KVALAATSTPTASAEQAS) the composition is skewed to low complexity. Over residues 114–128 (PEPELEVVDEVCDES) the composition is skewed to acidic residues. Basic and acidic residues-rich tracts occupy residues 149 to 163 (PQEK…KPAE) and 242 to 266 (PKRD…ESLK). The tr-type G domain maps to 395–564 (IRSPIVAFMG…ALQAEVLELK (170 aa)). The tract at residues 404–411 (GHVDHGKT) is G1. 404-411 (GHVDHGKT) serves as a coordination point for GTP. Positions 429–433 (AITQH) are G2. The tract at residues 450 to 453 (DTPG) is G3. Residues 450–454 (DTPGH) and 504–507 (NKCD) each bind GTP. The interval 504 to 507 (NKCD) is G4. The tract at residues 540 to 542 (SAK) is G5.

It belongs to the TRAFAC class translation factor GTPase superfamily. Classic translation factor GTPase family. IF-2 subfamily.

It is found in the cytoplasm. One of the essential components for the initiation of protein synthesis. Protects formylmethionyl-tRNA from spontaneous hydrolysis and promotes its binding to the 30S ribosomal subunits. Also involved in the hydrolysis of GTP during the formation of the 70S ribosomal complex. The chain is Translation initiation factor IF-2 (infB) from Chlamydia pneumoniae (Chlamydophila pneumoniae).